The sequence spans 310 residues: MSDMSDQTRLSSPPSLPLHKQPQSRYAWLVRSIQLMKPVTWFAPTWAFMCGAIASGALGWNESIGRLLLGMFMAGPILCGLSQVVNDYADREVDAINEPHRLIPSGQVSLRHVYILTAVLTWIGASIALFLGRQVAFFVALGLVFALAYSLRPIRGKRNGWIGNALVAISYEGLAWMAGHAAFAPLTGESVTIALLYSLGAHGIMTVNDFKSIRGDTIMGIRSIPVQYGKVMAARMVVTTMGVAQIAVIGLLFHWGHPVAATVVAILLAAQSIPNARFIRDPENNEVFFNATAIMLYVWGMLAAAIGLAA.

Polar residues predominate over residues 1 to 13 (MSDMSDQTRLSSP). The segment at 1–20 (MSDMSDQTRLSSPPSLPLHK) is disordered. Transmembrane regions (helical) follow at residues 39-59 (VTWFAPTWAFMCGAIASGALG), 67-87 (LLLGMFMAGPILCGLSQVVND), 112-132 (HVYILTAVLTWIGASIALFLG), 134-154 (QVAFFVALGLVFALAYSLRPI), 166-186 (LVAISYEGLAWMAGHAAFAPL), 187-207 (TGESVTIALLYSLGAHGIMTV), 248-268 (VIGLLFHWGHPVAATVVAILL), and 287-307 (VFFNATAIMLYVWGMLAAAIG).

The protein resides in the cell membrane. It functions in the pathway porphyrin-containing compound metabolism; bacteriochlorophyll biosynthesis (light-independent). Catalyzes the esterification of bacteriochlorophyllide a by geranylgeraniol-PPi. The chain is Bacteriochlorophyll synthase 34 kDa chain (bchG) from Chloroflexus aurantiacus (strain ATCC 29366 / DSM 635 / J-10-fl).